The chain runs to 304 residues: Splicing factor U2af small subunit B (304 aa).

The C3H1-type 1 zinc-finger motif lies at 12–40 (EKDRVNCPFYFKIGACRHGDRCSRLHNRP). The RRM domain maps to 44–146 (PTIVLANMYQ…RPIIVEYSPV (103 aa)). A C3H1-type 2 zinc finger spans residues 148–175 (DFREATCRQFEENSCNRGGYCNFMHVKQ). Over residues 184 to 207 (LYGGRSRRSHGRSRSPSPRHRRGN) the composition is skewed to basic residues. The tract at residues 184 to 304 (LYGGRSRRSH…QWNREREEKP (121 aa)) is disordered. A compositionally biased stretch (basic and acidic residues) spans 208–220 (RDRDDFRRERDGY). Gly residues predominate over residues 221-258 (RGGGDGYRGGGGGGGGDGYRGGDSYRGGGGGGRRGGGS). Positions 268–280 (RRRHGSPPRRARS) are enriched in basic residues. Residues 281–304 (PVRESSEERRAKIEQWNREREEKP) show a composition bias toward basic and acidic residues.

It belongs to the splicing factor SR family.

It is found in the nucleus. Functionally, necessary for the splicing of pre-mRNA. The chain is Splicing factor U2af small subunit B (U2AF35B) from Oryza sativa subsp. japonica (Rice).